Here is a 396-residue protein sequence, read N- to C-terminus: Alanine racemase (396 aa).

K46 (proton acceptor; specific for D-alanine) is an active-site residue. K46 bears the N6-(pyridoxal phosphate)lysine mark. Position 145 (R145) interacts with substrate. Y280 serves as the catalytic Proton acceptor; specific for L-alanine. Residue M328 participates in substrate binding.

Belongs to the alanine racemase family. The cofactor is pyridoxal 5'-phosphate.

It catalyses the reaction L-alanine = D-alanine. The protein operates within amino-acid biosynthesis; D-alanine biosynthesis; D-alanine from L-alanine: step 1/1. In terms of biological role, catalyzes the interconversion of L-alanine and D-alanine. May also act on other amino acids. This is Alanine racemase (alr) from Brucella abortus (strain 2308).